We begin with the raw amino-acid sequence, 105 residues long: Large ribosomal subunit protein uL24 (105 aa).

Belongs to the universal ribosomal protein uL24 family. In terms of assembly, part of the 50S ribosomal subunit.

Its function is as follows. One of two assembly initiator proteins, it binds directly to the 5'-end of the 23S rRNA, where it nucleates assembly of the 50S subunit. Functionally, one of the proteins that surrounds the polypeptide exit tunnel on the outside of the subunit. This is Large ribosomal subunit protein uL24 from Psychrobacter arcticus (strain DSM 17307 / VKM B-2377 / 273-4).